The chain runs to 376 residues: Succinyl-diaminopimelate desuccinylase (376 aa).

H67 is a binding site for Zn(2+). D69 is an active-site residue. Position 100 (D100) interacts with Zn(2+). E134 functions as the Proton acceptor in the catalytic mechanism. Residues E135, E163, and H349 each contribute to the Zn(2+) site.

It belongs to the peptidase M20A family. DapE subfamily. As to quaternary structure, homodimer. It depends on Zn(2+) as a cofactor. Co(2+) serves as cofactor.

It carries out the reaction N-succinyl-(2S,6S)-2,6-diaminopimelate + H2O = (2S,6S)-2,6-diaminopimelate + succinate. It participates in amino-acid biosynthesis; L-lysine biosynthesis via DAP pathway; LL-2,6-diaminopimelate from (S)-tetrahydrodipicolinate (succinylase route): step 3/3. Functionally, catalyzes the hydrolysis of N-succinyl-L,L-diaminopimelic acid (SDAP), forming succinate and LL-2,6-diaminopimelate (DAP), an intermediate involved in the bacterial biosynthesis of lysine and meso-diaminopimelic acid, an essential component of bacterial cell walls. This is Succinyl-diaminopimelate desuccinylase from Proteus mirabilis (strain HI4320).